Reading from the N-terminus, the 451-residue chain is MGRRYFGTDGIRGTVGEAPITPDFVLRLGYAAGKVLAGTADVAAGARPTVLIGKDTRVSGYMLEAALEAGFSAAGVDVMLAGPMPTPGVAYLTRALRLSAGVVISASHNPYQDNGIKFFSADGNKLPDETEAAIEAWLDKPLECASSDRLGKARRLEDAAGRYIEFCKSTFPAAYDLRGLKLVIDCAHGAAYQIAPHVFHELGADVIPIGVAPNGFNINDGVGATAPDALVRAVRANHADLGIALDGDADRLQVVDSTGRLYNGDELLYVLVKDRIATAGKVDGAVGTLMTNLAVEVALQREGVPFVRAAVGDRYVLEQLRERGWQLGAEGSGHILSLDRHSTGDGIVSALLVLAALKRSDRTLAQMLDGVTLFPQKLINVRMKPGADWKGSASIRAAIDAAEGALAGSGRVLIRASGTEPVLRVMVEAQQAADATRHAEAIADAVRIATS.

Catalysis depends on Ser-107, which acts as the Phosphoserine intermediate. 4 residues coordinate Mg(2+): Ser-107, Asp-246, Asp-248, and Asp-250. Ser-107 is subject to Phosphoserine.

The protein belongs to the phosphohexose mutase family. Mg(2+) is required as a cofactor. Post-translationally, activated by phosphorylation.

It carries out the reaction alpha-D-glucosamine 1-phosphate = D-glucosamine 6-phosphate. Its function is as follows. Catalyzes the conversion of glucosamine-6-phosphate to glucosamine-1-phosphate. In Burkholderia ambifaria (strain MC40-6), this protein is Phosphoglucosamine mutase.